The chain runs to 398 residues: 8-amino-7-oxononanoate synthase (398 aa).

Arg-23 serves as a coordination point for substrate. 110–111 (GY) is a binding site for pyridoxal 5'-phosphate. A substrate-binding site is contributed by His-135. Residues Ser-181, His-209, and Thr-237 each contribute to the pyridoxal 5'-phosphate site. Lys-240 is subject to N6-(pyridoxal phosphate)lysine. Thr-354 provides a ligand contact to substrate.

It belongs to the class-II pyridoxal-phosphate-dependent aminotransferase family. BioF subfamily. In terms of assembly, homodimer. Pyridoxal 5'-phosphate serves as cofactor.

The enzyme catalyses 6-carboxyhexanoyl-[ACP] + L-alanine + H(+) = (8S)-8-amino-7-oxononanoate + holo-[ACP] + CO2. It functions in the pathway cofactor biosynthesis; biotin biosynthesis. Its function is as follows. Catalyzes the decarboxylative condensation of pimeloyl-[acyl-carrier protein] and L-alanine to produce 8-amino-7-oxononanoate (AON), [acyl-carrier protein], and carbon dioxide. This Anaeromyxobacter dehalogenans (strain 2CP-1 / ATCC BAA-258) protein is 8-amino-7-oxononanoate synthase.